A 1726-amino-acid polypeptide reads, in one-letter code: MKMEEMDLEEDVLDVVDQEASTIVDILCEQRDNVLQRIFALVDARTREQLQHLPNNRESISGLVDYFRTSDQHTCRRFLDIIWSFCENIPLELDIRIVNLAGSTAGALVNNSHVPDTENSPQSRYGKRARLDQVQSYTNAVKSFLQKKFEKVTKDIKKEVCLNNTWLCWRTQKYARVRDRPAKSQEGEEVSLEHKESVEALLMKTGRVVMLSGQAGSGKTLLMHCLAHHWAQGSYPSIELLFLLEFRQLNLISQPLSLKELLFRFFLPSDEDDEQSEAVLNYVLSNPEKICFIFDGYDEFGARFKDPKELECSVNPYQQLPLADLLSALCSAKILPGCTVLVTCRPRDVFDLFGSSDYFVAELLGFNQQRVKEYTQEYFQEKGCEIKERAVSLLMDSHHLLSMSHVPGLCHVCCVCLDHFLTSDMSQQPGTQLPTSLTQIYLHILSAFISRCHGCGSSDNHTPLLQRYRVQIAMLSKLAMDGLENSRIVFPANELTTELMNFGANAGILSRLDLTCGDGSRRLGCAFTHLTIQEFMAALHLMTNPDITESQLKKKLNLKSRWTAKTDPKTVFTDSLHLYMCGLAAEACTSNLVLLKGSENARAIVLKRQDAVLKTLQRFVVSGRQTGPKIIELCRCAHETQNIDLARAIGPRDRFELRNIRLNPVDIDALAFVISSANQMVCLDFGACYIEPECLNIIPNCKNLEELNFRSRKYDDKFAEALSGILPKLQSLKQLHFISGGLTNIGAAKLFKASECCPQITRLNVSDNYLTDESVKKITELFPKLAKLTSVILGKNNISINGIFILAGKMAAFPNIKEVYANAKKKEINVQFSANTTNSASTDDLNNTEESKQLILNDWNLKWTNVHNLCPMLRGCSSLTVLNLSHNALGNRGLKKLLEHLPTLDTIQEINVSDNGVDMDGVVLLSPLLCTLKDLTEVEASHNGKKMLVLTFSSSIIDALKQVTSEGCDILHKKLSLTHSDIHPTDMNKLCKNLIKCPNPLNLDFSHGTLKDESTEKLLKFLPNMASLNLLNLSHIQMSTDSALLLVQLLSDCQRTTTVELRQLGETFIKFLQDKSEAATCKFNQYRLSSANLAKLCEILEHCHHLTDLDLSSNFLKDEDVKTFVQFLPKLQISGSVSLNNNNLTEVGVLYLLSLMHTCERVAAVEVSLGKEEQQDIIGFVQKNCTGKTFRLSSCTVQSQNVLFLLNKLATLNSVQTLELRNNSFSADTIKYLITEFCGDCNHRTIRIMEPWIKGEAAVGLVQCCLELNPNIKEIRVEKTCLKLSVESLVSATIPNEWENGNCSLSAVHCISFDDCEVEGQHLSSLQSALRNCPSLQELHFSQLTMGADGAEFLSSVLPSLKNLKILSLSSKGETEDEAVIFALQHAQKHLEQLSLAHHVIKDRGAAVLGNALQGFTRMRSLSLLKCLDWTATGGRDLVRGLVQCHSLEEIRLDSIELDEESIDCFAQGLQAMTSLKKISLNKTISKEGSGVLCLLASLHPLIELEEIELIGLRMGDRGVEELVKHIPKWTRLRKINLSENRVSDHAGEMLVKALSHCRALQQIHLFRNNLGHSSAAVLGQVLPSLSELTELDLSENQMESKGCSSVCEALVSMKALKKLHLTSIGTSDLVNVASCLKHCTSIEDISLSWNNCENDVVLKLAEVLPQCSKLKRLDLEANNINTSGAMALATCLQFCPWIEVIRLWRNPIKKDDLILKDKRLNFSST.

Positions 207-537 (RVVMLSGQAG…THLTIQEFMA (331 aa)) constitute an NACHT domain. 213–220 (GQAGSGKT) is a binding site for ATP. LRR repeat units lie at residues 879 to 902 (LTVLNLSHNALGNRGLKKLLEHLP), 904 to 925 (LDTIQEINVSDNGVDMDGVVLL), 1002 to 1025 (NLDFSHGTLKDESTEKLLKFLPNM), 1026 to 1048 (ASLNLLNLSHIQMSTDSALLLVQ), 1103 to 1126 (CHHLTDLDLSSNFLKDEDVKTFVQ), 1128 to 1155 (LPKLQISGSVSLNNNNLTEVGVLYLLSL), 1212 to 1235 (LNSVQTLELRNNSFSADTIKYLIT), 1351 to 1374 (AEFLSSVLPSLKNLKILSLSSKGE), 1387 to 1411 (AQKHLEQLSLAHHVIKDRGAAVLGN), 1421 to 1443 (SLSLLKCLDWTATGGRDLVRGLV), 1447 to 1468 (SLEEIRLDSIELDEESIDCFAQ), 1502 to 1525 (LIELEEIELIGLRMGDRGVEELVK), 1532 to 1553 (RLRKINLSENRVSDHAGEMLVK), 1560 to 1580 (ALQQIHLFRNNLGHSSAAVLG), 1588 to 1609 (ELTELDLSENQMESKGCSSVCE), 1616 to 1637 (ALKKLHLTSIGTSDLVNVASCL), 1642 to 1662 (SIEDISLSWNNCENDVVLKLA), and 1670 to 1691 (KLKRLDLEANNINTSGAMALAT).

It belongs to the NLRP family.

It localises to the cytoplasm. Its function is as follows. Probable regulator of the NF-kappa-B and type I interferon signaling pathways. May also regulate the type II interferon signaling pathway. Plays a role in homeostatic control of innate immunity and in antiviral defense mechanisms. This is Protein NLRC5 (nlrc5) from Ictalurus punctatus (Channel catfish).